Here is a 355-residue protein sequence, read N- to C-terminus: Ubiquinone biosynthesis protein COQ4 homolog, mitochondrial (355 aa).

Zn(2+) is bound by residues H134, D135, H138, and E150.

This sequence belongs to the COQ4 family. As to quaternary structure, component of a multi-subunit COQ enzyme complex. The cofactor is Zn(2+).

Its subcellular location is the mitochondrion inner membrane. The enzyme catalyses a 4-hydroxy-3-methoxy-5-(all-trans-polyprenyl)benzoate + H(+) = a 2-methoxy-6-(all-trans-polyprenyl)phenol + CO2. Its pathway is cofactor biosynthesis; ubiquinone biosynthesis. Lyase that catalyzes the C1-decarboxylation of 4-hydroxy-3-methoxy-5-(all-trans-polyprenyl)benzoic acid into 2-methoxy-6-(all-trans-polyprenyl)phenol during ubiquinone biosynthesis. This is Ubiquinone biosynthesis protein COQ4 homolog, mitochondrial from Plasmodium knowlesi (strain H).